A 153-amino-acid polypeptide reads, in one-letter code: Aspartate carbamoyltransferase regulatory chain (153 aa).

4 residues coordinate Zn(2+): cysteine 109, cysteine 114, cysteine 138, and cysteine 141.

The protein belongs to the PyrI family. In terms of assembly, contains catalytic and regulatory chains. It depends on Zn(2+) as a cofactor.

Its function is as follows. Involved in allosteric regulation of aspartate carbamoyltransferase. This chain is Aspartate carbamoyltransferase regulatory chain, found in Salmonella arizonae (strain ATCC BAA-731 / CDC346-86 / RSK2980).